We begin with the raw amino-acid sequence, 506 residues long: Pyruvate kinase 2 (506 aa).

Ser-24 carries the post-translational modification Phosphoserine. Arg-51 contributes to the substrate binding site. K(+) is bound by residues Asn-53, Ser-55, Asp-86, and Thr-87. Asn-53–His-56 lines the ATP pocket. ATP contacts are provided by Arg-93 and Lys-179. Glu-244 contacts Mg(2+). Substrate contacts are provided by Gly-267, Asp-268, and Thr-300. Asp-268 serves as a coordination point for Mg(2+).

It belongs to the pyruvate kinase family. In terms of assembly, homotetramer. It depends on Mg(2+) as a cofactor. K(+) is required as a cofactor.

It catalyses the reaction pyruvate + ATP = phosphoenolpyruvate + ADP + H(+). Its pathway is carbohydrate degradation; glycolysis; pyruvate from D-glyceraldehyde 3-phosphate: step 5/5. Its activity is regulated as follows. Not activated by fructose-1,6-bisphosphate. In terms of biological role, may be used by cells under conditions in which the level of glycolytic flux is very low. In Saccharomyces cerevisiae (strain ATCC 204508 / S288c) (Baker's yeast), this protein is Pyruvate kinase 2 (PYK2).